The sequence spans 78 residues: RNA-binding protein KhpA (78 aa).

A KH domain is found at 29-78; it reads TIIYELTVAKPDIGKIIGKEGRTIKAIRTLLVSVASRNNVKVSLEIMEDK.

The protein belongs to the KhpA RNA-binding protein family.

The protein localises to the cytoplasm. In terms of biological role, a probable RNA-binding protein. This is RNA-binding protein KhpA from Chlamydia caviae (strain ATCC VR-813 / DSM 19441 / 03DC25 / GPIC) (Chlamydophila caviae).